The sequence spans 474 residues: 3-isopropylmalate dehydratase large subunit (474 aa).

Residues Cys-353, Cys-414, and Cys-417 each coordinate [4Fe-4S] cluster.

It belongs to the aconitase/IPM isomerase family. LeuC type 1 subfamily. Heterodimer of LeuC and LeuD. [4Fe-4S] cluster serves as cofactor.

The enzyme catalyses (2R,3S)-3-isopropylmalate = (2S)-2-isopropylmalate. It participates in amino-acid biosynthesis; L-leucine biosynthesis; L-leucine from 3-methyl-2-oxobutanoate: step 2/4. Its function is as follows. Catalyzes the isomerization between 2-isopropylmalate and 3-isopropylmalate, via the formation of 2-isopropylmaleate. In Xylella fastidiosa (strain M12), this protein is 3-isopropylmalate dehydratase large subunit.